The following is a 430-amino-acid chain: Putative FBD-associated F-box protein At5g56440 (430 aa).

The F-box domain occupies 1–49 (MDRISLLPDDVVFKILSFVPTKVVVSTNLLSKRWRYLWKHVPKLDYRDP). Residues 349–399 (QWEQPSSVPKCLISSLETVEWIDYKGREVEKKVVMYLLENSRQLKTMAIRS) form the FBD domain.

This Arabidopsis thaliana (Mouse-ear cress) protein is Putative FBD-associated F-box protein At5g56440.